Reading from the N-terminus, the 740-residue chain is Ion-translocating oxidoreductase complex subunit C (740 aa).

2 consecutive 4Fe-4S ferredoxin-type domains span residues 369 to 397 (GEPQ…QQLY) and 407 to 436 (KATT…VQYF). Cysteine 377, cysteine 380, cysteine 383, cysteine 387, cysteine 416, cysteine 419, cysteine 422, and cysteine 426 together coordinate [4Fe-4S] cluster. Disordered stretches follow at residues 571-590 (LEQQ…RKAA) and 602-716 (KLEQ…DPRK). Composition is skewed to low complexity over residues 573–583 (QQQANAEPEQQ) and 637–647 (QQQANAEPEQQ).

It belongs to the 4Fe4S bacterial-type ferredoxin family. RnfC subfamily. As to quaternary structure, the complex is composed of six subunits: RsxA, RsxB, RsxC, RsxD, RsxE and RsxG. The cofactor is [4Fe-4S] cluster.

The protein localises to the cell inner membrane. In terms of biological role, part of a membrane-bound complex that couples electron transfer with translocation of ions across the membrane. Required to maintain the reduced state of SoxR. Probably transfers electron from NAD(P)H to SoxR. This Escherichia coli (strain K12) protein is Ion-translocating oxidoreductase complex subunit C.